We begin with the raw amino-acid sequence, 385 residues long: Suppressor protein STP22 of temperature-sensitive alpha-factor receptor and arginine permease (385 aa).

The UEV domain maps to 12–161 (AVVNWLFKVI…LHEPPQDQAP (150 aa)). The disordered stretch occupies residues 155-219 (PPQDQAPSLP…DMDNTDISPT (65 aa)). Over residues 168-177 (NTQLQQEQNT) the composition is skewed to polar residues. Residues 178–201 (PPLPPKPKSPHLKPPLPPPPPPQP) are compositionally biased toward pro residues. The stretch at 272–300 (LRAVEQAIEQTMHSLNAQIDVLTANRAKV) forms a coiled coil. Residues 322–385 (TDGLNQLYNL…HIQRITSPLS (64 aa)) enclose the SB domain.

This sequence belongs to the ubiquitin-conjugating enzyme family. UEV subfamily. In terms of assembly, component of the ESCRT-I complex (endosomal sorting complex required for transport I) which consists of STP22, VPS28, SRN2 and MVB12 in a 1:1:1:1 stoichiometry. Interacts with HSE1 and VPS27. Interacts with MVB12 and SRN2.

The protein resides in the cytoplasm. It is found in the endosome. Its subcellular location is the late endosome membrane. Its function is as follows. Component of the ESCRT-I complex, a regulator of vesicular trafficking process. Binds to ubiquitinated cargo proteins and is required for the sorting of endocytic ubiquitinated cargos into multivesicular bodies (MVBs). Mediates the association to the ESCRT-0 complex. Required for vacuolar targeting of temperature-sensitive plasma membrane proteins STE2 and CAN1. In Saccharomyces cerevisiae (strain ATCC 204508 / S288c) (Baker's yeast), this protein is Suppressor protein STP22 of temperature-sensitive alpha-factor receptor and arginine permease (STP22).